Here is a 549-residue protein sequence, read N- to C-terminus: Chaperonin GroEL 5 (549 aa).

ATP is bound by residues 30-33, lysine 51, 87-91, glycine 415, and aspartate 495; these read TLGP and DGTTT.

The protein belongs to the chaperonin (HSP60) family. Forms a cylinder of 14 subunits composed of two heptameric rings stacked back-to-back. Interacts with the co-chaperonin GroES.

It is found in the cytoplasm. It carries out the reaction ATP + H2O + a folded polypeptide = ADP + phosphate + an unfolded polypeptide.. Functionally, together with its co-chaperonin GroES, plays an essential role in assisting protein folding. The GroEL-GroES system forms a nano-cage that allows encapsulation of the non-native substrate proteins and provides a physical environment optimized to promote and accelerate protein folding. The sequence is that of Chaperonin GroEL 5 from Mesorhizobium japonicum (strain LMG 29417 / CECT 9101 / MAFF 303099) (Mesorhizobium loti (strain MAFF 303099)).